The primary structure comprises 347 residues: Anthranilate phosphoribosyltransferase (347 aa).

5-phospho-alpha-D-ribose 1-diphosphate-binding positions include G88, 91–92, T96, 98–101, 116–124, and S128; these read GD, NIST, and KHGNRSVSS. G88 serves as a coordination point for anthranilate. S100 is a Mg(2+) binding site. N119 contacts anthranilate. Anthranilate is bound at residue R174. D232 and E233 together coordinate Mg(2+).

Belongs to the anthranilate phosphoribosyltransferase family. Homodimer. Requires Mg(2+) as cofactor.

The catalysed reaction is N-(5-phospho-beta-D-ribosyl)anthranilate + diphosphate = 5-phospho-alpha-D-ribose 1-diphosphate + anthranilate. It functions in the pathway amino-acid biosynthesis; L-tryptophan biosynthesis; L-tryptophan from chorismate: step 2/5. In terms of biological role, catalyzes the transfer of the phosphoribosyl group of 5-phosphorylribose-1-pyrophosphate (PRPP) to anthranilate to yield N-(5'-phosphoribosyl)-anthranilate (PRA). The polypeptide is Anthranilate phosphoribosyltransferase (Shewanella sp. (strain MR-4)).